The primary structure comprises 347 residues: 4-hydroxy-2-oxovalerate aldolase 2 (347 aa).

A Pyruvate carboxyltransferase domain is found at 9–259; that stretch reads ITIVDTTLRD…DTGVDLFPLI (251 aa). Substrate is bound by residues 17-18, Ser-171, and His-198; that span reads RD. Asp-18 provides a ligand contact to Mn(2+). Mn(2+) is bound by residues His-198 and His-200. Residue Tyr-289 coordinates substrate.

It belongs to the 4-hydroxy-2-oxovalerate aldolase family.

The enzyme catalyses (S)-4-hydroxy-2-oxopentanoate = acetaldehyde + pyruvate. In Rhodococcus opacus (strain B4), this protein is 4-hydroxy-2-oxovalerate aldolase 2.